The sequence spans 155 residues: Ribosome maturation factor RimP (155 aa).

Belongs to the RimP family.

It localises to the cytoplasm. Required for maturation of 30S ribosomal subunits. This Gemmatimonas aurantiaca (strain DSM 14586 / JCM 11422 / NBRC 100505 / T-27) protein is Ribosome maturation factor RimP.